We begin with the raw amino-acid sequence, 661 residues long: PAN2-PAN3 deadenylation complex subunit PAN3 (661 aa).

Disordered stretches follow at residues 1–26 (MASA…AREN) and 53–130 (DPHK…LRQD). The segment at 26 to 55 (NAKDTLCRNITIYGRCRYEDKGCAFNHDPH) adopts a C3H1-type zinc-finger fold. The span at 75–102 (SFTPSLLSSNGSSPTSTPATTKKMTTIS) shows a compositional bias: low complexity. Over residues 115 to 130 (SVVSRSNASTPGLRQD) the composition is skewed to polar residues. A pseudokinase domain region spans residues 263–524 (QTLPNTQLPA…NIDIFITGIS (262 aa)). ATP-binding positions include Arg315, 364–371 (DYHPLSKT), and 424–425 (SK). The stretch at 525–563 (SQLMSTFDSALHLDDQLTSDLSRELENGRLVRLMTKLNF) forms a coiled coil. Residues 564–661 (VNERPEYEHD…ALMKPARRMH (98 aa)) form a knob domain region.

It belongs to the protein kinase superfamily. PAN3 family. In terms of assembly, homodimer. Forms a heterotrimer with a catalytic subunit pan2 to form the poly(A)-nuclease (PAN) deadenylation complex. Interacts (via PAM-2 motif) with poly(A)-binding protein pab1 (via PABC domain), conferring substrate specificity of the enzyme complex.

Its subcellular location is the cytoplasm. In terms of biological role, regulatory subunit of the poly(A)-nuclease (PAN) deadenylation complex, one of two cytoplasmic mRNA deadenylases involved in mRNA turnover. PAN specifically shortens poly(A) tails of RNA and the activity is stimulated by poly(A)-binding protein pab1. PAN deadenylation is followed by rapid degradation of the shortened mRNA tails by the CCR4-NOT complex. Deadenylated mRNAs are then degraded by two alternative mechanisms, namely exosome-mediated 3'-5' exonucleolytic degradation, or deadenylation-dependent mRNA decaping and subsequent 5'-3' exonucleolytic degradation by xrn1. May also be involved in post-transcriptional maturation of mRNA poly(A) tails. pan3 acts as a positive regulator for PAN activity, recruiting the catalytic subunit pan2 to mRNA via its interaction with RNA and with pab1. The sequence is that of PAN2-PAN3 deadenylation complex subunit PAN3 from Neosartorya fischeri (strain ATCC 1020 / DSM 3700 / CBS 544.65 / FGSC A1164 / JCM 1740 / NRRL 181 / WB 181) (Aspergillus fischerianus).